The following is a 357-amino-acid chain: MTMPVLIMAGGTGGHVFPALAVAERLREQGVPVVWLGTREGLEARVVPAADIPLESLRVRGLRGNGLRGWLAAPFVLLRALWQALGVLRRHRPRAVLGMGGYAAGPGAVAAWLTRRPLIIHEQNAVAGLTNRLLSRLARRVLTGFPGILPERGGEHVGNPVRDAITRVPGPADRGAGAHEPLRLLVVGGSLGALALNSTVPAALARLPEVQRPVVRHQAGERTLQQAREAYDQAGIAVDLQPFIEDMAAAWTWADLAICRAGALTVAELEAVGVPAILVPLPGAVDDHQTANARQFVAAGAGVLLPQSELSAQRLALELKTLLADPPRLQRMAQCARGLGRPDAAATVARICLEEAR.

UDP-N-acetyl-alpha-D-glucosamine is bound by residues 12–14, Asn-124, Arg-162, Ser-190, Ile-244, 263–268, and Gln-289; these read TGG and ALTVAE.

It belongs to the glycosyltransferase 28 family. MurG subfamily.

It is found in the cell inner membrane. The enzyme catalyses di-trans,octa-cis-undecaprenyl diphospho-N-acetyl-alpha-D-muramoyl-L-alanyl-D-glutamyl-meso-2,6-diaminopimeloyl-D-alanyl-D-alanine + UDP-N-acetyl-alpha-D-glucosamine = di-trans,octa-cis-undecaprenyl diphospho-[N-acetyl-alpha-D-glucosaminyl-(1-&gt;4)]-N-acetyl-alpha-D-muramoyl-L-alanyl-D-glutamyl-meso-2,6-diaminopimeloyl-D-alanyl-D-alanine + UDP + H(+). The protein operates within cell wall biogenesis; peptidoglycan biosynthesis. Functionally, cell wall formation. Catalyzes the transfer of a GlcNAc subunit on undecaprenyl-pyrophosphoryl-MurNAc-pentapeptide (lipid intermediate I) to form undecaprenyl-pyrophosphoryl-MurNAc-(pentapeptide)GlcNAc (lipid intermediate II). The chain is UDP-N-acetylglucosamine--N-acetylmuramyl-(pentapeptide) pyrophosphoryl-undecaprenol N-acetylglucosamine transferase from Alkalilimnicola ehrlichii (strain ATCC BAA-1101 / DSM 17681 / MLHE-1).